The following is a 521-amino-acid chain: Nitric oxide reductase transcription regulator NorR2 (521 aa).

Position 56 is a 4-aspartylphosphate (aspartate 56). Residues isoleucine 193–leucine 422 enclose the Sigma-54 factor interaction domain. ATP contacts are provided by residues glycine 221–glutamate 228 and glutamate 293–glutamine 302. Positions tryptophan 497–arginine 516 form a DNA-binding region, H-T-H motif.

It participates in nitrogen metabolism; nitrate reduction (denitrification) [regulation]. Required for the nitric oxide (NO) induced expression of NO reductase. Not required for expression of 2 other pathway members, nitrate reductase (nirS) and nitrous oxide reductase (nosZ). This chain is Nitric oxide reductase transcription regulator NorR2 (norR2), found in Cupriavidus necator (strain ATCC 17699 / DSM 428 / KCTC 22496 / NCIMB 10442 / H16 / Stanier 337) (Ralstonia eutropha).